Consider the following 505-residue polypeptide: UDP-N-acetylmuramate--L-alanine ligase (505 aa).

164–170 (GTHGKTT) serves as a coordination point for ATP.

This sequence belongs to the MurCDEF family.

It localises to the cytoplasm. The catalysed reaction is UDP-N-acetyl-alpha-D-muramate + L-alanine + ATP = UDP-N-acetyl-alpha-D-muramoyl-L-alanine + ADP + phosphate + H(+). The protein operates within cell wall biogenesis; peptidoglycan biosynthesis. Cell wall formation. The chain is UDP-N-acetylmuramate--L-alanine ligase from Synechocystis sp. (strain ATCC 27184 / PCC 6803 / Kazusa).